The chain runs to 234 residues: Chalcone--flavanone isomerase 2 (234 aa).

Positions 50, 115, and 192 each coordinate substrate.

The protein belongs to the chalcone isomerase family.

The catalysed reaction is a chalcone = a flavanone.. The protein operates within secondary metabolite biosynthesis; flavonoid biosynthesis. Its function is as follows. Catalyzes the intramolecular cyclization of bicyclic chalcones into tricyclic (S)-flavanones. Responsible for the isomerization of 4,2',4',6'-tetrahydroxychalcone (also termed chalcone) into naringenin. This chain is Chalcone--flavanone isomerase 2 (CHI2), found in Vitis vinifera (Grape).